Reading from the N-terminus, the 305-residue chain is Serine/threonine-protein phosphatase PP2A catalytic subunit (305 aa).

The Mn(2+) site is built by Asp53, His55, Asp81, and Asn113. His114 serves as the catalytic Proton donor. Mn(2+)-binding residues include His163 and His237.

It belongs to the PPP phosphatase family. PP-2A subfamily. Requires Mn(2+) as cofactor.

It catalyses the reaction O-phospho-L-seryl-[protein] + H2O = L-seryl-[protein] + phosphate. The enzyme catalyses O-phospho-L-threonyl-[protein] + H2O = L-threonyl-[protein] + phosphate. This Helianthus annuus (Common sunflower) protein is Serine/threonine-protein phosphatase PP2A catalytic subunit.